A 60-amino-acid chain; its full sequence is Putative transmembrane protein 74 (60 aa).

Transmembrane regions (helical) follow at residues 4–24 (FSVIMYLINSVIFTFMIFLTF) and 35–55 (WVYILIGFFTAIVFHSGYQAG).

The protein localises to the host membrane. The sequence is that of Putative transmembrane protein 74 (SIFV0074) from Sulfolobus islandicus filamentous virus (isolate Iceland/Hveragerdi) (SIFV).